A 220-amino-acid polypeptide reads, in one-letter code: Deoxyribose-phosphate aldolase (220 aa).

Catalysis depends on aspartate 89, which acts as the Proton donor/acceptor. Catalysis depends on lysine 151, which acts as the Schiff-base intermediate with acetaldehyde. Catalysis depends on lysine 180, which acts as the Proton donor/acceptor.

Belongs to the DeoC/FbaB aldolase family. DeoC type 1 subfamily.

The protein resides in the cytoplasm. It carries out the reaction 2-deoxy-D-ribose 5-phosphate = D-glyceraldehyde 3-phosphate + acetaldehyde. It participates in carbohydrate degradation; 2-deoxy-D-ribose 1-phosphate degradation; D-glyceraldehyde 3-phosphate and acetaldehyde from 2-deoxy-alpha-D-ribose 1-phosphate: step 2/2. Its function is as follows. Catalyzes a reversible aldol reaction between acetaldehyde and D-glyceraldehyde 3-phosphate to generate 2-deoxy-D-ribose 5-phosphate. The sequence is that of Deoxyribose-phosphate aldolase from Streptococcus pneumoniae serotype 19F (strain G54).